A 64-amino-acid chain; its full sequence is uncharacterized protein (64 aa).

It is found in the host cytoplasm. This is an uncharacterized protein from Enterobacteriaceae (Bacteriophage Mu).